Reading from the N-terminus, the 251-residue chain is Ubiquinone/menaquinone biosynthesis C-methyltransferase UbiE (251 aa).

S-adenosyl-L-methionine-binding positions include threonine 74, aspartate 95, and 123–124 (NA).

Belongs to the class I-like SAM-binding methyltransferase superfamily. MenG/UbiE family.

The catalysed reaction is a 2-demethylmenaquinol + S-adenosyl-L-methionine = a menaquinol + S-adenosyl-L-homocysteine + H(+). The enzyme catalyses a 2-methoxy-6-(all-trans-polyprenyl)benzene-1,4-diol + S-adenosyl-L-methionine = a 5-methoxy-2-methyl-3-(all-trans-polyprenyl)benzene-1,4-diol + S-adenosyl-L-homocysteine + H(+). It functions in the pathway quinol/quinone metabolism; menaquinone biosynthesis; menaquinol from 1,4-dihydroxy-2-naphthoate: step 2/2. It participates in cofactor biosynthesis; ubiquinone biosynthesis. Functionally, methyltransferase required for the conversion of demethylmenaquinol (DMKH2) to menaquinol (MKH2) and the conversion of 2-polyprenyl-6-methoxy-1,4-benzoquinol (DDMQH2) to 2-polyprenyl-3-methyl-6-methoxy-1,4-benzoquinol (DMQH2). The sequence is that of Ubiquinone/menaquinone biosynthesis C-methyltransferase UbiE from Shewanella baltica (strain OS223).